Reading from the N-terminus, the 317-residue chain is Melanocyte-stimulating hormone receptor (317 aa).

Residues 1–37 (MPVQGSQRRLLGSLNSTPTAPPHLGLAANQTGARCLE) lie on the Extracellular side of the membrane. Residue asparagine 29 is glycosylated (N-linked (GlcNAc...) asparagine). A helical membrane pass occupies residues 38-63 (VSIPDGLFLSLGLVSLVENVLVVTAI). At 64-72 (AKNRNLHSP) the chain is on the cytoplasmic side. A helical transmembrane segment spans residues 73 to 93 (MYCFICCLALSDLLVSGSNML). The Extracellular segment spans residues 94–118 (ETAVILLLEAGALAARAAVVQQLDN). Residues 119–140 (VIDVITCSSMLSSLCFLGAIAV) traverse the membrane as a helical segment. At 141–163 (DRYISIFYALRYHSIVTLPRARR) the chain is on the cytoplasmic side. A helical transmembrane segment spans residues 164 to 183 (AVAAIWVASVLFSMLFIAYY). The Extracellular portion of the chain corresponds to 184 to 191 (DHAAVLLC). Residues 192-211 (LVVFFLAMLVLMAVLYIHML) form a helical membrane-spanning segment. Residues 212–240 (VRACQHAQGIARLHKRQRPAHQGFGLKGA) are Cytoplasmic-facing. Residues 241-266 (ATLTILLGIFFLCWGPFFLHLTLIVL) form a helical membrane-spanning segment. Residues 267-279 (CPQHPTCSCIFKN) lie on the Extracellular side of the membrane. Residues 280–300 (FNLFLALIICNAIIDPLIYAF) traverse the membrane as a helical segment. Topologically, residues 301 to 317 (RSQELRRTLKEVLLCSW) are cytoplasmic. Cysteine 315 is lipidated: S-palmitoyl cysteine.

Belongs to the G-protein coupled receptor 1 family. Interacts with MGRN1, but does not undergo MGRN1-mediated ubiquitination; this interaction competes with GNAS-binding and thus inhibits agonist-induced cAMP production. Interacts with OPN3; the interaction results in a decrease in MC1R-mediated cAMP signaling and ultimately a decrease in melanin production in melanocytes.

Its subcellular location is the cell membrane. Its function is as follows. Receptor for MSH (alpha, beta and gamma) and ACTH. The activity of this receptor is mediated by G proteins which activate adenylate cyclase. Mediates melanogenesis, the production of eumelanin (black/brown) and phaeomelanin (red/yellow), via regulation of cAMP signaling in melanocytes. The polypeptide is Melanocyte-stimulating hormone receptor (MC1R) (Cercopithecus diana (Diana monkey)).